The following is a 55-amino-acid chain: Large ribosomal subunit protein bL33 (55 aa).

Belongs to the bacterial ribosomal protein bL33 family.

This chain is Large ribosomal subunit protein bL33, found in Dehalococcoides mccartyi (strain ATCC BAA-2100 / JCM 16839 / KCTC 5957 / BAV1).